A 74-amino-acid polypeptide reads, in one-letter code: uncharacterized protein (74 aa).

This is an uncharacterized protein from Invertebrate iridescent virus 3 (IIV-3).